The sequence spans 518 residues: Mitochondrial 2-methylisocitrate lyase (518 aa).

It belongs to the isocitrate lyase/PEP mutase superfamily. Isocitrate lyase family.

It localises to the mitochondrion matrix. Its subcellular location is the cytoplasm. It catalyses the reaction (2S,3R)-3-hydroxybutane-1,2,3-tricarboxylate = pyruvate + succinate. It participates in organic acid metabolism; propanoate degradation. In terms of biological role, catalyzes the formation of pyruvate and succinate from 2-methylisocitrate during the metabolism of endogenous propionyl-CoA. Does not act on isocitrate. This Schizosaccharomyces pombe (strain 972 / ATCC 24843) (Fission yeast) protein is Mitochondrial 2-methylisocitrate lyase (icl2).